Here is a 188-residue protein sequence, read N- to C-terminus: Pro-adrenomedullin (188 aa).

The N-terminal stretch at 1 to 21 (MKLVPVALMYLGSLAFLGADT) is a signal peptide. Arginine amide is present on R41. A propeptide spanning residues 45–92 (ELRLSSSYPTGIADLKAGPAQTVIRPQDVKGSSRSPQASIPDAARIRV) is cleaved from the precursor. Residues C110 and C115 are joined by a disulfide bond. A disordered region spans residues 131-177 (DKDGVAPRSKISPQGYGRRRRRSLPEASLGRTLRSQEPQAHGAPASP). Y146 is subject to Tyrosine amide. The propeptide at 153-188 (SLPEASLGRTLRSQEPQAHGAPASPAHQVLATLFRI) is preproAM C-terminal fragment.

Belongs to the adrenomedullin family. As to expression, highly expressed in adrenal glands, lung and kidney.

The protein resides in the secreted. Its function is as follows. Adrenomedullin/ADM and proadrenomedullin N-20 terminal peptide/PAMP are peptide hormones that act as potent hypotensive and vasodilatator agents. Numerous actions have been reported most related to the physiologic control of fluid and electrolyte homeostasis. ADM function is mediated by the CALCRL-RAMP2 and CALCRL-RAMP3 receptor complexes with ADM showing the highest potency for the CALCRL-RAMP2 complex. This is Pro-adrenomedullin (ADM) from Sus scrofa (Pig).